A 710-amino-acid chain; its full sequence is MFDIQKETIEWAGRPLTIETGRVARQADGAVMVSYGETTVLATAVGVKQAKPGVDFFPLTVNYQEKYFAAGKIPGGFFKREGRPTDKETLTSRLIDRPIRPLFVKGFKNEVQVMLTVLSHDLENDPDIVGMIGASAALVLSGLPFMGPIGAARVGYKDGEYVINPPCDEMDDSELDLVVAGTQDAVMMVESEAKELSEEVMLGAVMAGHKAFQPVIDMIIKLAERAAKEPWDYAPADHSAEEAKVRDLIGDDLAAAYTIVDKTERYKAVGAAKDKAVEALLQTEERPDGIDMTTLKDVMKAVESSIVRGGIIKTGKRIDGRSLDQVRSIVSEAGILPRTHGSALFTRGETQALVVATLGTGEDEQFIDALTGTYKERFMLHYNFPPYSVGETSFRLAPGRREIGHGKLAWRAVKAVLPTKEDFPYTIRLVSEITESNGSSSMATVCGASLSMMDAGVPITRPVSGIAMGLIKDPEGIAVLSDILGDEDHLGDMDFKVAGTTEGVTSLQMDIKIAGIDEEIMKTALAQASGGRLHILEEMGKALGEARTELGEFAPRIETITIPTDKIRDVIGSGGKVIREIVETTGAKVDVNDDGVIKVSSSDGASIKAALDWIHGLTAEPEEGQIYKGKVVKVMDFGAFVNFFGPKDGLVHVSQLKAERVNHPSDVVKEGQEVYVKLLGFDDRGKVRLSMKIIDQETGEEIKKEQEDAE.

Residues Asp-488 and Asp-494 each coordinate Mg(2+). The 60-residue stretch at 555–614 folds into the KH domain; sequence PRIETITIPTDKIRDVIGSGGKVIREIVETTGAKVDVNDDGVIKVSSSDGASIKAALDWI. The S1 motif domain occupies 624–692; it reads GQIYKGKVVK…DRGKVRLSMK (69 aa).

The protein belongs to the polyribonucleotide nucleotidyltransferase family. Mg(2+) serves as cofactor.

It is found in the cytoplasm. It catalyses the reaction RNA(n+1) + phosphate = RNA(n) + a ribonucleoside 5'-diphosphate. Its function is as follows. Involved in mRNA degradation. Catalyzes the phosphorolysis of single-stranded polyribonucleotides processively in the 3'- to 5'-direction. In Maricaulis maris (strain MCS10) (Caulobacter maris), this protein is Polyribonucleotide nucleotidyltransferase.